The primary structure comprises 375 residues: Adiponectin receptor protein 1 (375 aa).

Positions 1 to 60 are disordered; the sequence is MSSHKGSAGAQGNGAPSGNREADTVELAELGPLLEEKGKRAASSPAKAEEDQACPVPQEE. At 1–136 the chain is on the cytoplasmic side; that stretch reads MSSHKGSAGA…SIFRIHTETG (136 aa). A helical transmembrane segment spans residues 137–157; the sequence is NIWTHLLGFVLFLFLGILTML. Residues 158–170 are Extracellular-facing; sequence RPNMYFMAPLQEK. The chain crosses the membrane as a helical span at residues 171 to 191; sequence VVFGMFFLGAVLCLSFSWLFH. Position 191 (His-191) interacts with Zn(2+). The Cytoplasmic portion of the chain corresponds to 192–203; the sequence is TVYCHSEKVSRT. The chain crosses the membrane as a helical span at residues 204–224; that stretch reads FSKLDYSGIALLIMGSFVPWL. The Extracellular segment spans residues 225 to 234; it reads YYSFYCSPQP. The helical transmembrane segment at 235 to 255 threads the bilayer; it reads RLIYLSIVCVLGISAIIVAQW. Over 256-264 the chain is Cytoplasmic; it reads DRFATPKHR. A helical membrane pass occupies residues 265–285; the sequence is QTRAGVFLGLGLSGVVPTMHF. Residues 286–298 are Extracellular-facing; the sequence is TIAEGFVKATTVG. The chain crosses the membrane as a helical span at residues 299-319; sequence QMGWFFLMAVMYITGAGLYAA. The Cytoplasmic segment spans residues 320–337; the sequence is RIPERFFPGKFDIWFQSH. Zn(2+) is bound by residues His-337 and His-341. The helical transmembrane segment at 338 to 358 threads the bilayer; sequence QIFHVLVVAAAFVHFYGVSNL. Over 359–375 the chain is Extracellular; it reads QEFRYGLEGGCTDDSLL.

The protein belongs to the ADIPOR family. As to quaternary structure, may form homooligomers and heterooligomers with ADIPOR2. Interacts with APPL2 (via BAR domain); hinders the accessibility of APPL1 to ADIPOR1; negatively regulates adiponectin signaling; ADIPOQ dissociates this interaction and facilitates the recruitment of APPL1 to ADIPOR1. Interacts with APPL1; ADIPOQ enhances this interaction; inhibites adiponectin-stimulated binding of APPL2 to ADIPOR1. In terms of tissue distribution, detected in brain and quadriceps muscle (at protein level). Widely expressed. Expressed in heart, kidney, liver, lung, skeletal muscle, white adipose tissue, brown adipose tissue, aorta and spleen. Weakly expressed in brain and testis.

The protein resides in the cell membrane. Its function is as follows. Receptor for ADIPOQ, an essential hormone secreted by adipocytes that regulates glucose and lipid metabolism. Required for normal glucose and fat homeostasis and for maintaining a normal body weight. ADIPOQ-binding activates a signaling cascade that leads to increased AMPK activity, and ultimately to increased fatty acid oxidation, increased glucose uptake and decreased gluconeogenesis. Has high affinity for globular adiponectin and low affinity for full-length adiponectin. This chain is Adiponectin receptor protein 1, found in Mus musculus (Mouse).